A 214-amino-acid polypeptide reads, in one-letter code: Adenylate kinase (214 aa).

10–15 (GAGKGT) serves as a coordination point for ATP. The NMP stretch occupies residues 30–59 (STGDMLRAAVKSGSELGKQAKDIMDAGKLV). Residues Thr31, Arg36, 57–59 (KLV), 85–88 (GFPR), and Gln92 contribute to the AMP site. The LID stretch occupies residues 122 to 159 (GRRVHAPSGRVYHVKFNPPKVEGKDDVTGEELTTRKDD). ATP contacts are provided by residues Arg123 and 132–133 (VY). Residues Arg156 and Arg167 each contribute to the AMP site. N6-acetyllysine is present on Lys192. Lys200 contacts ATP.

This sequence belongs to the adenylate kinase family. In terms of assembly, monomer.

Its subcellular location is the cytoplasm. The catalysed reaction is AMP + ATP = 2 ADP. It functions in the pathway purine metabolism; AMP biosynthesis via salvage pathway; AMP from ADP: step 1/1. Functionally, catalyzes the reversible transfer of the terminal phosphate group between ATP and AMP. Plays an important role in cellular energy homeostasis and in adenine nucleotide metabolism. The protein is Adenylate kinase of Escherichia coli O45:K1 (strain S88 / ExPEC).